We begin with the raw amino-acid sequence, 228 residues long: RNA-free ribonuclease P (228 aa).

It belongs to the HARP family.

The enzyme catalyses Endonucleolytic cleavage of RNA, removing 5'-extranucleotides from tRNA precursor.. RNA-free RNase P that catalyzes the removal of the 5'-leader sequence from pre-tRNA to produce the mature 5'-terminus. This is RNA-free ribonuclease P from Methanopyrus kandleri (strain AV19 / DSM 6324 / JCM 9639 / NBRC 100938).